Consider the following 557-residue polypeptide: 2-succinyl-5-enolpyruvyl-6-hydroxy-3-cyclohexene-1-carboxylate synthase (557 aa).

The protein belongs to the TPP enzyme family. MenD subfamily. Homodimer. It depends on Mg(2+) as a cofactor. Mn(2+) is required as a cofactor. Thiamine diphosphate serves as cofactor.

The catalysed reaction is isochorismate + 2-oxoglutarate + H(+) = 5-enolpyruvoyl-6-hydroxy-2-succinyl-cyclohex-3-ene-1-carboxylate + CO2. Its pathway is quinol/quinone metabolism; 1,4-dihydroxy-2-naphthoate biosynthesis; 1,4-dihydroxy-2-naphthoate from chorismate: step 2/7. The protein operates within quinol/quinone metabolism; menaquinone biosynthesis. Functionally, catalyzes the thiamine diphosphate-dependent decarboxylation of 2-oxoglutarate and the subsequent addition of the resulting succinic semialdehyde-thiamine pyrophosphate anion to isochorismate to yield 2-succinyl-5-enolpyruvyl-6-hydroxy-3-cyclohexene-1-carboxylate (SEPHCHC). The polypeptide is 2-succinyl-5-enolpyruvyl-6-hydroxy-3-cyclohexene-1-carboxylate synthase (Staphylococcus aureus (strain bovine RF122 / ET3-1)).